The sequence spans 113 residues: Retrotransposon Gag-like protein 8A (113 aa).

It belongs to the FAM127 family.

The protein is Retrotransposon Gag-like protein 8A of Homo sapiens (Human).